A 664-amino-acid chain; its full sequence is Acetylcholinesterase (664 aa).

Residues 1-29 (MFVNQRTRRPYMSVFVLVLGAAVICPAYG) form the signal peptide. Cysteine 95 and cysteine 122 are joined by a disulfide. Asparagine 117 carries N-linked (GlcNAc...) asparagine glycosylation. Residue serine 261 is the Acyl-ester intermediate of the active site. Cysteine 315 and cysteine 330 form a disulfide bridge. N-linked (GlcNAc...) asparagine glycosylation is present at asparagine 316. Residues glutamate 390 and histidine 504 each act as charge relay system in the active site. Residues cysteine 466 and cysteine 588 are joined by a disulfide bond. N-linked (GlcNAc...) asparagine glycosylation is present at asparagine 517. Residue asparagine 647 is the site of GPI-anchor amidated asparagine attachment. A propeptide spans 648-664 (KTPPHPQVILETRAFMH) (removed in mature form).

This sequence belongs to the type-B carboxylesterase/lipase family. As to quaternary structure, homodimer; disulfide-linked.

It is found in the synapse. The protein localises to the cell membrane. The catalysed reaction is acetylcholine + H2O = choline + acetate + H(+). Functionally, rapidly hydrolyzes choline released into the synapse. It can hydrolyze butyrylthiocholine. This Anopheles stephensi (Indo-Pakistan malaria mosquito) protein is Acetylcholinesterase.